We begin with the raw amino-acid sequence, 123 residues long: S-adenosylmethionine decarboxylase proenzyme 2 (123 aa).

S65 (schiff-base intermediate with substrate; via pyruvic acid) is an active-site residue. At S65 the chain carries Pyruvic acid (Ser); by autocatalysis. H70 acts as the Proton acceptor; for processing activity in catalysis. C85 functions as the Proton donor; for catalytic activity in the catalytic mechanism.

This sequence belongs to the prokaryotic AdoMetDC family. Type 1 subfamily. As to quaternary structure, heterotetramer of two alpha and two beta chains arranged as a dimer of alpha/beta heterodimers. Pyruvate serves as cofactor. In terms of processing, is synthesized initially as an inactive proenzyme. Formation of the active enzyme involves a self-maturation process in which the active site pyruvoyl group is generated from an internal serine residue via an autocatalytic post-translational modification. Two non-identical subunits are generated from the proenzyme in this reaction, and the pyruvate is formed at the N-terminus of the alpha chain, which is derived from the carboxyl end of the proenzyme. The post-translation cleavage follows an unusual pathway, termed non-hydrolytic serinolysis, in which the side chain hydroxyl group of the serine supplies its oxygen atom to form the C-terminus of the beta chain, while the remainder of the serine residue undergoes an oxidative deamination to produce ammonia and the pyruvoyl group blocking the N-terminus of the alpha chain.

It carries out the reaction S-adenosyl-L-methionine + H(+) = S-adenosyl 3-(methylsulfanyl)propylamine + CO2. It participates in amine and polyamine biosynthesis; S-adenosylmethioninamine biosynthesis; S-adenosylmethioninamine from S-adenosyl-L-methionine: step 1/1. In terms of biological role, catalyzes the decarboxylation of S-adenosylmethionine to S-adenosylmethioninamine (dcAdoMet), the propylamine donor required for the synthesis of the polyamines spermine and spermidine from the diamine putrescine. This is S-adenosylmethionine decarboxylase proenzyme 2 from Bacillus anthracis.